The primary structure comprises 239 residues: Ribosomal RNA small subunit methyltransferase G (239 aa).

Residues Gly-79, Phe-84, 130-131 (AE), and Arg-149 each bind S-adenosyl-L-methionine.

It belongs to the methyltransferase superfamily. RNA methyltransferase RsmG family.

The protein localises to the cytoplasm. In terms of biological role, specifically methylates the N7 position of a guanine in 16S rRNA. In Lactobacillus delbrueckii subsp. bulgaricus (strain ATCC 11842 / DSM 20081 / BCRC 10696 / JCM 1002 / NBRC 13953 / NCIMB 11778 / NCTC 12712 / WDCM 00102 / Lb 14), this protein is Ribosomal RNA small subunit methyltransferase G.